A 306-amino-acid polypeptide reads, in one-letter code: Porphobilinogen deaminase (306 aa).

Cys-241 is subject to S-(dipyrrolylmethanemethyl)cysteine.

This sequence belongs to the HMBS family. Monomer. Dipyrromethane serves as cofactor.

The catalysed reaction is 4 porphobilinogen + H2O = hydroxymethylbilane + 4 NH4(+). Its pathway is porphyrin-containing compound metabolism; protoporphyrin-IX biosynthesis; coproporphyrinogen-III from 5-aminolevulinate: step 2/4. Tetrapolymerization of the monopyrrole PBG into the hydroxymethylbilane pre-uroporphyrinogen in several discrete steps. The polypeptide is Porphobilinogen deaminase (Acidithiobacillus ferrooxidans (strain ATCC 23270 / DSM 14882 / CIP 104768 / NCIMB 8455) (Ferrobacillus ferrooxidans (strain ATCC 23270))).